We begin with the raw amino-acid sequence, 255 residues long: Probable transcriptional regulatory protein CMS0715 (255 aa).

This sequence belongs to the TACO1 family.

The protein localises to the cytoplasm. In Clavibacter sepedonicus (Clavibacter michiganensis subsp. sepedonicus), this protein is Probable transcriptional regulatory protein CMS0715.